The primary structure comprises 43 residues: Photosystem I reaction center subunit IX (43 aa).

The chain crosses the membrane as a helical span at residues tyrosine 7–isoleucine 27.

The protein belongs to the PsaJ family.

The protein localises to the plastid. It is found in the chloroplast thylakoid membrane. In terms of biological role, may help in the organization of the PsaE and PsaF subunits. The sequence is that of Photosystem I reaction center subunit IX from Vitis vinifera (Grape).